The chain runs to 173 residues: Peptidoglycan-associated lipoprotein (173 aa).

Positions 1–21 are cleaved as a signal peptide; sequence MKSKKIFKILTLLLPMITTFS. Cys-22 carries N-palmitoyl cysteine lipidation. Cys-22 carries the S-diacylglycerol cysteine lipid modification. The OmpA-like domain occupies 59–173; sequence ETLEKLKKGN…KNRRSVIIYQ (115 aa).

It belongs to the Pal lipoprotein family.

Its subcellular location is the cell outer membrane. The chain is Peptidoglycan-associated lipoprotein from Buchnera aphidicola subsp. Baizongia pistaciae (strain Bp).